We begin with the raw amino-acid sequence, 87 residues long: Acetolactate synthase isozyme 2 small subunit (87 aa).

Positions 5 to 78 (QVNVSARFNP…DVAHVAICQS (74 aa)) constitute an ACT domain.

Tetramer of two large and two small chains. Mg(2+) serves as cofactor. The cofactor is thiamine diphosphate.

It catalyses the reaction 2 pyruvate + H(+) = (2S)-2-acetolactate + CO2. The protein operates within amino-acid biosynthesis; L-isoleucine biosynthesis; L-isoleucine from 2-oxobutanoate: step 1/4. It participates in amino-acid biosynthesis; L-valine biosynthesis; L-valine from pyruvate: step 1/4. This is Acetolactate synthase isozyme 2 small subunit (ilvM) from Escherichia coli O6:H1 (strain CFT073 / ATCC 700928 / UPEC).